Consider the following 345-residue polypeptide: Centromere protein U (345 aa).

Basic residues-rich tracts occupy residues 1 to 10 (MSSKKRTKRN) and 19 to 29 (HKGRSHPRRKF). 2 disordered regions span residues 1–37 (MSSKKRTKRNRAGDEYKEHKGRSHPRRKFLPPEEPDV) and 64–153 (AVDA…SSVQ). Residues 88 to 106 (NAERSEKMLLETPEGDVHE) show a composition bias toward basic and acidic residues. Positions 142–152 (SDSSVNSPSSV) are enriched in low complexity. Residues 201 to 294 (CSAFEDQVTD…QDYLDYREEN (94 aa)) adopt a coiled-coil conformation. The Nuclear localization signal motif lies at 222-239 (KKKNAKVVADIKKKRQRL).

The protein belongs to the CENP-U/AME1 family. Interacts with CENPH-CENPI complex at the kinetochore.

Its subcellular location is the nucleus. It is found in the chromosome. It localises to the centromere. Its function is as follows. Probable component of a centromeric complex involved in assembly of kinetochore proteins, mitotic progression and chromosome segregation. Required for maintenance of sister chromatid adhesion during mitotic checkpoint activation. The chain is Centromere protein U (CENPU) from Gallus gallus (Chicken).